Reading from the N-terminus, the 381-residue chain is Subtilisin NAT (381 aa).

The signal sequence occupies residues 1 to 29 (MRSKKLWISLLFALTLIFTMAFSNMSAQA). Positions 30–106 (AGKSSTEKKY…VEEDHIAHEY (77 aa)) are excised as a propeptide. In terms of domain architecture, Inhibitor I9 spans 38–103 (KYIVGFKQTM…VAYVEEDHIA (66 aa)). In terms of domain architecture, Peptidase S8 spans 111-380 (PYGISQIKAP…KGLINVQAAA (270 aa)). Asp-138 acts as the Charge relay system in catalysis. Ca(2+) is bound at residue Asp-147. The active-site Charge relay system is His-170. Residues Leu-181, Asn-183, Ile-185, Val-187, Ala-275, Tyr-277, Thr-280, and Asp-303 each coordinate Ca(2+). Ser-327 functions as the Charge relay system in the catalytic mechanism.

Belongs to the peptidase S8 family. In terms of assembly, monomer. Ca(2+) is required as a cofactor.

It is found in the secreted. The enzyme catalyses Hydrolysis of proteins with broad specificity for peptide bonds, and a preference for a large uncharged residue in P1. Hydrolyzes peptide amides.. With respect to regulation, inhibited by PMSF (phenylmethylsulfonyl fluoride). In terms of biological role, subtilisin is an extracellular alkaline serine protease, it catalyzes the hydrolysis of proteins and peptide amides. Subtilisin NAT also has fibrinolytic activity. The chain is Subtilisin NAT from Bacillus subtilis subsp. natto.